The chain runs to 346 residues: UPF0718 protein YraQ (346 aa).

9 consecutive transmembrane segments (helical) span residues 12-32, 71-91, 113-133, 146-166, 167-187, 223-243, 260-280, 296-316, and 326-346; these read PIQW…LWYV, MIYF…GSLI, LLGT…APVA, ALAF…FMGF, VLGW…VLLI, ALWT…LVLG, SLMW…PTAA, APAL…LIML, and WLTG…ALLF.

Belongs to the UPF0718 family.

Its subcellular location is the cell membrane. The chain is UPF0718 protein YraQ (yraQ) from Escherichia coli (strain K12).